Here is a 154-residue protein sequence, read N- to C-terminus: uncharacterized protein (154 aa).

A run of 4 helical transmembrane segments spans residues 15 to 37, 58 to 80, 95 to 116, and 123 to 145; these read DFSF…ALIT, FAAM…WLWG, LGAL…FAFT, and LVIS…FVPH.

Its subcellular location is the cell membrane. This is an uncharacterized protein from Archaeoglobus fulgidus (strain ATCC 49558 / DSM 4304 / JCM 9628 / NBRC 100126 / VC-16).